A 338-amino-acid chain; its full sequence is Ketol-acid reductoisomerase (NADP(+)) (338 aa).

The 181-residue stretch at 1–181 (MKVFYDKDCD…GGGKAGIIET (181 aa)) folds into the KARI N-terminal Rossmann domain. NADP(+) contacts are provided by residues 24-27 (YGSQ), arginine 47, and serine 52. Histidine 107 is a catalytic residue. Glycine 133 serves as a coordination point for NADP(+). The region spanning 182–327 (NFREETETDL…GKLRAMMPWI (146 aa)) is the KARI C-terminal knotted domain. Positions 190, 194, 226, and 230 each coordinate Mg(2+). Serine 251 contacts substrate.

This sequence belongs to the ketol-acid reductoisomerase family. Requires Mg(2+) as cofactor.

The enzyme catalyses (2R)-2,3-dihydroxy-3-methylbutanoate + NADP(+) = (2S)-2-acetolactate + NADPH + H(+). The catalysed reaction is (2R,3R)-2,3-dihydroxy-3-methylpentanoate + NADP(+) = (S)-2-ethyl-2-hydroxy-3-oxobutanoate + NADPH + H(+). It functions in the pathway amino-acid biosynthesis; L-isoleucine biosynthesis; L-isoleucine from 2-oxobutanoate: step 2/4. It participates in amino-acid biosynthesis; L-valine biosynthesis; L-valine from pyruvate: step 2/4. Functionally, involved in the biosynthesis of branched-chain amino acids (BCAA). Catalyzes an alkyl-migration followed by a ketol-acid reduction of (S)-2-acetolactate (S2AL) to yield (R)-2,3-dihydroxy-isovalerate. In the isomerase reaction, S2AL is rearranged via a Mg-dependent methyl migration to produce 3-hydroxy-3-methyl-2-ketobutyrate (HMKB). In the reductase reaction, this 2-ketoacid undergoes a metal-dependent reduction by NADPH to yield (R)-2,3-dihydroxy-isovalerate. This Polaromonas naphthalenivorans (strain CJ2) protein is Ketol-acid reductoisomerase (NADP(+)).